The sequence spans 382 residues: Acetyltransferase eriL (382 aa).

A run of 6 helical transmembrane segments spans residues 5–25 (LQPL…LGAV), 33–53 (ALLF…TTTG), 59–79 (IVTW…LLIN), 146–166 (TLFY…SPVF), 192–212 (LWSY…ALGV), and 335–355 (GYMW…DPQF).

This sequence belongs to the wax synthase family.

It is found in the membrane. The enzyme catalyses cyathatriol + acetyl-CoA = 11-O-acetylcyathatriol + CoA. The catalysed reaction is cyathin A3 + acetyl-CoA = 11-O-acetylcyathin A3 + CoA. Its pathway is secondary metabolite biosynthesis. In terms of biological role, acetyltransferase; part of the gene cluster that mediates the biosynthesis of erinacines, cyathane-xylosides that show unique biological activities, including leishmanicidal activity, stimulating activity for nerve growth-factor synthesis, and agonistic activity toward the kappa opioid receptor. Within the pathway, eriL converts cyathatriol into 11-O-acetyl-cyathatriol. EriL is also able to acetylate cyathin A3 to produce 11-O-acetylcyathin A3. The first step of the erinacines biosynthesis pathway is catalyzed by the geranylgeranyl diphosphate (GGPP) synthase eriE via conversion of farnesyl pyrophosphate and isopentyl pyrophosphate into geranylgeranyl pyrophosphate (GGPP). GGPP is then substrate of the diterpene cyclase eriG for the production of cyatha-3,12-diene. The cytochrome P450 monooxygenase eriI then hydroxylates cyatha-3,12-diene at C-14 of the seven-membered ring to produce erinacol, which is further hydroxylated at C-15 by the cytochrome P450 monooxygenase eriC to yield cyathadiol. The cytochrome P450 monooxygenase eriA then catalyzes C-11 hydroxylation in the presence of the short chain dehydrogenase/reductase (SDR) eriH, which leads to the production of cyathatriol. The acetyltransferase eriL converts cyathatriol into 11-O-acetyl-cyathatriol. The SDR eriH catalyzes further oxidation of 11-O-acetyl-cyathatriol into 1-O-acetylcyathin A3. Finally, the glycosyl transferase eriJ tranfers xylose from UDP-xylose onto C-14 of 11-O-acetyl-cyathatriol to form eracine Q. EriJ is also able to convert 11-O-acetyl-cyathatriol to eracine Q2 by using UDP-D-glucose as cosubstrate, but at a lower rate. The sequence is that of Acetyltransferase eriL from Hericium erinaceus (Lion's mane mushroom).